The primary structure comprises 94 residues: Small ribosomal subunit protein uS19c (94 aa).

The protein belongs to the universal ribosomal protein uS19 family.

It is found in the plastid. It localises to the chloroplast. Protein S19 forms a complex with S13 that binds strongly to the 16S ribosomal RNA. The sequence is that of Small ribosomal subunit protein uS19c from Pleurastrum terricola (Filamentous green alga).